Consider the following 119-residue polypeptide: NADH-quinone oxidoreductase subunit A (119 aa).

A run of 3 helical transmembrane segments spans residues 7-27, 63-83, and 88-108; these read YPVL…VSIG, LVAI…PWGV, and IGWP…LGFA.

It belongs to the complex I subunit 3 family. NDH-1 is composed of 14 different subunits. Subunits NuoA, H, J, K, L, M, N constitute the membrane sector of the complex.

The protein localises to the cell inner membrane. It catalyses the reaction a quinone + NADH + 5 H(+)(in) = a quinol + NAD(+) + 4 H(+)(out). In terms of biological role, NDH-1 shuttles electrons from NADH, via FMN and iron-sulfur (Fe-S) centers, to quinones in the respiratory chain. The immediate electron acceptor for the enzyme in this species is believed to be ubiquinone. Couples the redox reaction to proton translocation (for every two electrons transferred, four hydrogen ions are translocated across the cytoplasmic membrane), and thus conserves the redox energy in a proton gradient. The chain is NADH-quinone oxidoreductase subunit A from Burkholderia mallei (strain NCTC 10247).